A 34-amino-acid polypeptide reads, in one-letter code: Toxin GTx1-15 (34 aa).

Disulfide bonds link Cys2/Cys17, Cys9/Cys23, and Cys16/Cys30. Phe34 is modified (phenylalanine amide).

The protein belongs to the neurotoxin 10 (Hwtx-1) family. 08 (Gtx1-15) subfamily. As to expression, expressed by the venom gland.

The protein resides in the secreted. Its function is as follows. Potent voltage-gated sodium channel blocker. Potently inhibits the voltage-gated sodium channels Nav1.7/SCN9A (IC(50)=0.58-10 nM). Also shows a moderate activity on Nav1.1/SCN1A (IC(50)=6 nM), Nav1.2/SCN2A (IC(50)=5-128 nM), Nav1.3/SCN3A (IC(50)=20.3-170 nM), and Nav1.6/SCN8A (IC(50)=17-20.1 nM). Shows an unclear inhibition of Nav1.4/SCN4A (IC(50)=200 nM to &gt;10 uM), Nav1.5/SCN5A (IC(50)=140 nM to &gt;10 uM) and Nav1.8/SCN10A (IC(50)=68-12200 nM). Weakly blocks the low voltage-gated calcium channels Cav3.1/CACNA1G (30% inhibition of the peak current at 9.8 nM). shows moderate affinity for lipid bilayers. In vivo, when tested on the OD1-induced mouse model of Nav1.7/SCN9A-mediated pain, the toxin is effective when co-administered with OD1, but lacks efficacy when delivered systemically. This Grammostola porteri (Tarantula spider) protein is Toxin GTx1-15.